A 213-amino-acid chain; its full sequence is Penicillin-binding protein activator LpoB (213 aa).

The N-terminal stretch at 1–19 is a signal peptide; it reads MTKMSRYALITALAMFLAG. A lipid anchor (N-palmitoyl cysteine) is attached at Cys-20. Cys-20 carries S-diacylglycerol cysteine lipidation. The tract at residues 28 to 74 is disordered; sequence PVEEVKPAPEQPAEPQQPVPTVPSVPTIPQQPGPIEHEDQTAPPAPH. Residues 36–50 are compositionally biased toward pro residues; the sequence is PEQPAEPQQPVPTVP.

This sequence belongs to the LpoB family. As to quaternary structure, interacts with PBP1b.

The protein resides in the cell outer membrane. Functionally, regulator of peptidoglycan synthesis that is essential for the function of penicillin-binding protein 1B (PBP1b). The polypeptide is Penicillin-binding protein activator LpoB (Escherichia coli O157:H7).